The chain runs to 865 residues: Protein translocase subunit SecA (865 aa).

ATP is bound by residues glutamine 93, 111-115 (GEGKT), and aspartate 501. 4 residues coordinate Zn(2+): cysteine 841, cysteine 843, cysteine 852, and cysteine 853.

It belongs to the SecA family. Monomer and homodimer. Part of the essential Sec protein translocation apparatus which comprises SecA, SecYEG and auxiliary proteins SecDF-YajC and YidC. Zn(2+) is required as a cofactor.

The protein resides in the cell inner membrane. It localises to the cytoplasm. The catalysed reaction is ATP + H2O + cellular proteinSide 1 = ADP + phosphate + cellular proteinSide 2.. Part of the Sec protein translocase complex. Interacts with the SecYEG preprotein conducting channel. Has a central role in coupling the hydrolysis of ATP to the transfer of proteins into and across the cell membrane, serving as an ATP-driven molecular motor driving the stepwise translocation of polypeptide chains across the membrane. This is Protein translocase subunit SecA from Helicobacter pylori (strain HPAG1).